Here is a 292-residue protein sequence, read N- to C-terminus: Ribosomal protein L11 methyltransferase (292 aa).

T145, G166, D188, and N229 together coordinate S-adenosyl-L-methionine.

Belongs to the methyltransferase superfamily. PrmA family.

It localises to the cytoplasm. It catalyses the reaction L-lysyl-[protein] + 3 S-adenosyl-L-methionine = N(6),N(6),N(6)-trimethyl-L-lysyl-[protein] + 3 S-adenosyl-L-homocysteine + 3 H(+). Functionally, methylates ribosomal protein L11. This chain is Ribosomal protein L11 methyltransferase, found in Nitrosococcus oceani (strain ATCC 19707 / BCRC 17464 / JCM 30415 / NCIMB 11848 / C-107).